We begin with the raw amino-acid sequence, 420 residues long: Putative movement protein (420 aa).

Composition is skewed to low complexity over residues 1–18 (MPLT…TSFS) and 30–59 (TSCS…GSCP). Disordered stretches follow at residues 1–77 (MPLT…TARP), 137–181 (SMSR…SARS), 195–219 (RPKT…STRT), 235–281 (IMSE…RPPP), 327–370 (PSAG…RPIQ), and 396–420 (LPPP…QPWP). Residues 60–69 (KTPPGTPPLP) show a composition bias toward pro residues. A compositionally biased stretch (polar residues) spans 137–157 (SMSRRATQPPTTRSRVRPSTG). Over residues 158 to 181 (SRPPVSPLVTSSSPSPFSTLSARS) the composition is skewed to low complexity. Over residues 253–263 (GLRSASLSTAG) the composition is skewed to polar residues. Residues 327 to 348 (PSAGSSPFTPTVSGCSASTSSA) are compositionally biased toward low complexity.

Its function is as follows. Cell-to-cell movement. The sequence is that of Putative movement protein from Maize rayado fino virus (isolate Costa Rica/Guapiles) (MRFV).